Reading from the N-terminus, the 379-residue chain is Early boundary activity protein 3 (379 aa).

In terms of assembly, the heterotrimeric Elba complex consists of Elba1, Elba2 and Elba3.

It localises to the nucleus. The heterotrimeric Elba complex is required for chromatin domain boundary function during early embryogenesis. It binds to a 8-bp sequence 5'-CCAATAAG-3' in the Fab-7 insulator or boundary element in the bithorax complex and contributes to its insulator or boundary activity. Elba3 lacks DNA-binding activity and plays the role of an adapter protein, bringing Elba1 and 2 together, thereby establishing a complex that recognizes the asymmetric sequence motif through the BEN domains of Elba1 and 2. The polypeptide is Early boundary activity protein 3 (Drosophila melanogaster (Fruit fly)).